A 153-amino-acid chain; its full sequence is Ribosome maturation factor RimP (153 aa).

Belongs to the RimP family.

It is found in the cytoplasm. Functionally, required for maturation of 30S ribosomal subunits. The chain is Ribosome maturation factor RimP from Clostridium botulinum (strain Loch Maree / Type A3).